A 671-amino-acid chain; its full sequence is DNA ligase (671 aa).

Residues 32-36 (DAEYD), 81-82 (SL), and Glu113 contribute to the NAD(+) site. Lys115 serves as the catalytic N6-AMP-lysine intermediate. 4 residues coordinate NAD(+): Arg136, Glu173, Lys290, and Lys314. The Zn(2+) site is built by Cys408, Cys411, Cys426, and Cys432. In terms of domain architecture, BRCT spans 593-671 (EIDSPFAGKT…EAEMLRLLGS (79 aa)).

Belongs to the NAD-dependent DNA ligase family. LigA subfamily. The cofactor is Mg(2+). Mn(2+) is required as a cofactor.

It carries out the reaction NAD(+) + (deoxyribonucleotide)n-3'-hydroxyl + 5'-phospho-(deoxyribonucleotide)m = (deoxyribonucleotide)n+m + AMP + beta-nicotinamide D-nucleotide.. In terms of biological role, DNA ligase that catalyzes the formation of phosphodiester linkages between 5'-phosphoryl and 3'-hydroxyl groups in double-stranded DNA using NAD as a coenzyme and as the energy source for the reaction. It is essential for DNA replication and repair of damaged DNA. The chain is DNA ligase from Escherichia coli (strain SE11).